We begin with the raw amino-acid sequence, 392 residues long: Formate-dependent phosphoribosylglycinamide formyltransferase (392 aa).

Residues 22–23 (EL) and Glu-82 contribute to the N(1)-(5-phospho-beta-D-ribosyl)glycinamide site. ATP-binding positions include Arg-114, Lys-155, 160 to 165 (SSGKGQ), 195 to 198 (EGVV), and Glu-203. An ATP-grasp domain is found at 119 to 308 (RLAAEELQLP…EFALHVRAFL (190 aa)). Residues Glu-267 and Glu-279 each coordinate Mg(2+). N(1)-(5-phospho-beta-D-ribosyl)glycinamide is bound by residues Asp-286, Lys-355, and 362 to 363 (RR).

The protein belongs to the PurK/PurT family. Homodimer.

It carries out the reaction N(1)-(5-phospho-beta-D-ribosyl)glycinamide + formate + ATP = N(2)-formyl-N(1)-(5-phospho-beta-D-ribosyl)glycinamide + ADP + phosphate + H(+). The protein operates within purine metabolism; IMP biosynthesis via de novo pathway; N(2)-formyl-N(1)-(5-phospho-D-ribosyl)glycinamide from N(1)-(5-phospho-D-ribosyl)glycinamide (formate route): step 1/1. Its function is as follows. Involved in the de novo purine biosynthesis. Catalyzes the transfer of formate to 5-phospho-ribosyl-glycinamide (GAR), producing 5-phospho-ribosyl-N-formylglycinamide (FGAR). Formate is provided by PurU via hydrolysis of 10-formyl-tetrahydrofolate. This is Formate-dependent phosphoribosylglycinamide formyltransferase from Escherichia coli O1:K1 / APEC.